Consider the following 124-residue polypeptide: Flowering-promoting factor 1-like protein 1 (124 aa).

The disordered stretch occupies residues Pro-19 to Arg-42. Low complexity predominate over residues Gln-22–Gln-39.

This sequence belongs to the FPF1 family. In terms of tissue distribution, expressed in roots, flowers, and at a low level, in leaves.

Functionally, modulates the competence to flowering of apical meristems. The protein is Flowering-promoting factor 1-like protein 1 (FLP1) of Arabidopsis thaliana (Mouse-ear cress).